A 102-amino-acid polypeptide reads, in one-letter code: Small ribosomal subunit protein uS10 (102 aa).

This sequence belongs to the universal ribosomal protein uS10 family. Part of the 30S ribosomal subunit.

Functionally, involved in the binding of tRNA to the ribosomes. This chain is Small ribosomal subunit protein uS10, found in Myxococcus xanthus (strain DK1622).